We begin with the raw amino-acid sequence, 226 residues long: Gap junction beta-2 protein (226 aa).

Residues Asp2–Val13 lie within the membrane without spanning it. Residues Asn14–Ile20 lie on the Cytoplasmic side of the membrane. The chain crosses the membrane as a helical span at residues Gly21–Ala40. Topologically, residues Lys41 to His73 are extracellular. Residues Glu42, Gly45, and Glu47 each contribute to the Ca(2+) site. Disulfide bonds link Cys53–Cys180, Cys60–Cys174, and Cys64–Cys169. The chain crosses the membrane as a helical span at residues Ile74–His94. The Cytoplasmic portion of the chain corresponds to Val95 to Thr135. Residues Tyr136–Val156 traverse the membrane as a helical segment. The Extracellular portion of the chain corresponds to Met157–Thr189. Residues Val190–Leu210 traverse the membrane as a helical segment. Topologically, residues Cys211 to Val226 are cytoplasmic.

The protein belongs to the connexin family. Beta-type (group I) subfamily. In terms of assembly, a hemichannel or connexon is composed of a hexamer of connexins. A functional gap junction is formed by the apposition of two hemichannels. Forms heteromeric channels with GJB4. Interacts with CNST.

The protein localises to the cell membrane. The protein resides in the cell junction. It localises to the gap junction. Functionally, structural component of gap junctions. Gap junctions are dodecameric channels that connect the cytoplasm of adjoining cells. They are formed by the docking of two hexameric hemichannels, one from each cell membrane. Small molecules and ions diffuse from one cell to a neighboring cell via the central pore. This chain is Gap junction beta-2 protein (GJB2), found in Pongo pygmaeus (Bornean orangutan).